Consider the following 434-residue polypeptide: Pyrichalasin H cluster regulator BC2 (434 aa).

2 disordered regions span residues Gly-297–Leu-321 and His-362–His-383. A compositionally biased stretch (polar residues) spans Ser-298–Thr-309. The span at His-362–Arg-380 shows a compositional bias: basic and acidic residues.

The protein resides in the nucleus. In terms of biological role, transcription factor probably involved in regulation of gene cluster that mediates the biosynthesis of a tyrosine-derived cytochalasan acting as a fungal signal recognized by resistant rice plants and leads to avirulence in Pi33 resistant rice cultivars. The chain is Pyrichalasin H cluster regulator BC2 from Pyricularia oryzae (strain 70-15 / ATCC MYA-4617 / FGSC 8958) (Rice blast fungus).